The sequence spans 412 residues: Eukaryotic initiation factor 4A-2 (412 aa).

N-acetylalanine is present on Ala2. Residues 39-67 (ESFDAMGLQENLLRGIYAYGFEKPSAIQQ) carry the Q motif motif. One can recognise a Helicase ATP-binding domain in the interval 70-240 (IVPFCKGLDV…RKFMSKPVRI (171 aa)). Residue 83–90 (AQSGTGKT) coordinates ATP. At Thr145 the chain carries Phosphothreonine. Positions 188-191 (DEAD) match the DEAD box motif. A Helicase C-terminal domain is found at 251–412 (GIKQFYVNVE…ELPSNVADLL (162 aa)).

It belongs to the DEAD box helicase family. eIF4A subfamily. In terms of assembly, eIF4F is a multi-subunit complex, the composition of which varies with external and internal environmental conditions. It is composed of at least EIF4A, EIF4E and EIF4G. As to expression, ubiquitous. Preferentially expressed in flowers, young leaves and roots.

The protein resides in the cytoplasm. The catalysed reaction is ATP + H2O = ADP + phosphate + H(+). Functionally, ATP-dependent RNA helicase which is a subunit of the eIF4F complex involved in cap recognition and is required for mRNA binding to ribosome. In the current model of translation initiation, eIF4A unwinds RNA secondary structures in the 5'-UTR of mRNAs which is necessary to allow efficient binding of the small ribosomal subunit, and subsequent scanning for the initiator codon. The polypeptide is Eukaryotic initiation factor 4A-2 (TIF4A-2) (Arabidopsis thaliana (Mouse-ear cress)).